The chain runs to 294 residues: Probable ABC transporter permease protein YqgI (294 aa).

6 helical membrane-spanning segments follow: residues 14 to 34 (FGLC…YIII), 66 to 86 (FYIL…GGVF), 99 to 121 (FIRT…FGLL), 126 to 148 (LTGW…LPVM), 190 to 210 (IITG…ALLF), and 260 to 280 (AIAN…NLAA). The 219-residue stretch at 62 to 280 (LFNSFYILFI…ISVLVFNLAA (219 aa)) folds into the ABC transmembrane type-1 domain.

It belongs to the binding-protein-dependent transport system permease family. CysTW subfamily.

It is found in the cell membrane. In terms of biological role, part of the binding-protein-dependent transport system YqgGHIJK. Probably responsible for the translocation of the substrate across the membrane. This is Probable ABC transporter permease protein YqgI (yqgI) from Bacillus subtilis (strain 168).